Reading from the N-terminus, the 206-residue chain is Small ribosomal subunit protein uS4A (206 aa).

Residues 98–164 (MRLDNVVYKL…EKFKTFAENP (67 aa)) enclose the S4 RNA-binding domain.

It belongs to the universal ribosomal protein uS4 family. As to quaternary structure, part of the 30S ribosomal subunit. Contacts protein S5. The interaction surface between S4 and S5 is involved in control of translational fidelity.

Its function is as follows. One of the primary rRNA binding proteins, it binds directly to 16S rRNA where it nucleates assembly of the body of the 30S subunit. With S5 and S12 plays an important role in translational accuracy. The polypeptide is Small ribosomal subunit protein uS4A (Clostridium novyi (strain NT)).